The primary structure comprises 132 residues: Small ribosomal subunit protein bS6 (132 aa).

The interval 96–132 (HAEGPSIQMQKRDERERGDRGDRSDRGDRGDRGGFRR) is disordered. Positions 105-132 (QKRDERERGDRGDRSDRGDRGDRGGFRR) are enriched in basic and acidic residues.

It belongs to the bacterial ribosomal protein bS6 family.

In terms of biological role, binds together with bS18 to 16S ribosomal RNA. This Cereibacter sphaeroides (strain ATCC 17023 / DSM 158 / JCM 6121 / CCUG 31486 / LMG 2827 / NBRC 12203 / NCIMB 8253 / ATH 2.4.1.) (Rhodobacter sphaeroides) protein is Small ribosomal subunit protein bS6.